Reading from the N-terminus, the 154-residue chain is Large ribosomal subunit protein uL30 (154 aa).

This sequence belongs to the universal ribosomal protein uL30 family. Part of the 50S ribosomal subunit.

This is Large ribosomal subunit protein uL30 from Methanocaldococcus jannaschii (strain ATCC 43067 / DSM 2661 / JAL-1 / JCM 10045 / NBRC 100440) (Methanococcus jannaschii).